Consider the following 269-residue polypeptide: tRNA pseudouridine synthase A (269 aa).

The Nucleophile role is filled by D51. Y109 is a binding site for substrate.

The protein belongs to the tRNA pseudouridine synthase TruA family. As to quaternary structure, homodimer.

The enzyme catalyses uridine(38/39/40) in tRNA = pseudouridine(38/39/40) in tRNA. Its function is as follows. Formation of pseudouridine at positions 38, 39 and 40 in the anticodon stem and loop of transfer RNAs. The chain is tRNA pseudouridine synthase A from Aeromonas salmonicida (strain A449).